The following is a 175-amino-acid chain: MQTFILAGGCFWCLDAVYRTLDGVQDVISGYIGGHTAHPSYDAVCTGATGHAEAVKVVFDEEVIPADVILDVFFTLHDPRQLNRQGADVGTQYRSAMFPADAEQEQLFRDAIARAGDLLDGTPVTTIEPLGTWHDAEDYHQDFFAKNPGQGYCNAVAVPKVNKVRKSFAQYVRAA.

The active site involves cysteine 10.

The protein belongs to the MsrA Met sulfoxide reductase family.

It catalyses the reaction L-methionyl-[protein] + [thioredoxin]-disulfide + H2O = L-methionyl-(S)-S-oxide-[protein] + [thioredoxin]-dithiol. The enzyme catalyses [thioredoxin]-disulfide + L-methionine + H2O = L-methionine (S)-S-oxide + [thioredoxin]-dithiol. Its function is as follows. Has an important function as a repair enzyme for proteins that have been inactivated by oxidation. Catalyzes the reversible oxidation-reduction of methionine sulfoxide in proteins to methionine. This is Peptide methionine sulfoxide reductase MsrA from Clavibacter sepedonicus (Clavibacter michiganensis subsp. sepedonicus).